The sequence spans 291 residues: Nucleotide-binding protein EUBREC_0697 (291 aa).

8–15 (GMSGAGKS) lines the ATP pocket. 59-62 (DVRN) serves as a coordination point for GTP.

The protein belongs to the RapZ-like family.

Functionally, displays ATPase and GTPase activities. This chain is Nucleotide-binding protein EUBREC_0697, found in Agathobacter rectalis (strain ATCC 33656 / DSM 3377 / JCM 17463 / KCTC 5835 / VPI 0990) (Eubacterium rectale).